Consider the following 355-residue polypeptide: UDP-N-acetylglucosamine--N-acetylmuramyl-(pentapeptide) pyrophosphoryl-undecaprenol N-acetylglucosamine transferase (355 aa).

UDP-N-acetyl-alpha-D-glucosamine contacts are provided by residues 13–15, Asn-125, Arg-162, Ser-190, Ile-244, and Gln-289; that span reads TGG.

It belongs to the glycosyltransferase 28 family. MurG subfamily.

The protein resides in the cell inner membrane. It carries out the reaction di-trans,octa-cis-undecaprenyl diphospho-N-acetyl-alpha-D-muramoyl-L-alanyl-D-glutamyl-meso-2,6-diaminopimeloyl-D-alanyl-D-alanine + UDP-N-acetyl-alpha-D-glucosamine = di-trans,octa-cis-undecaprenyl diphospho-[N-acetyl-alpha-D-glucosaminyl-(1-&gt;4)]-N-acetyl-alpha-D-muramoyl-L-alanyl-D-glutamyl-meso-2,6-diaminopimeloyl-D-alanyl-D-alanine + UDP + H(+). Its pathway is cell wall biogenesis; peptidoglycan biosynthesis. Functionally, cell wall formation. Catalyzes the transfer of a GlcNAc subunit on undecaprenyl-pyrophosphoryl-MurNAc-pentapeptide (lipid intermediate I) to form undecaprenyl-pyrophosphoryl-MurNAc-(pentapeptide)GlcNAc (lipid intermediate II). The polypeptide is UDP-N-acetylglucosamine--N-acetylmuramyl-(pentapeptide) pyrophosphoryl-undecaprenol N-acetylglucosamine transferase (Neisseria meningitidis serogroup B (strain ATCC BAA-335 / MC58)).